A 565-amino-acid chain; its full sequence is Thiol:disulfide interchange protein DsbD (565 aa).

The first 19 residues, 1–19 (MAQRIFTLILLLCSTSVFA), serve as a signal peptide directing secretion. Topologically, residues 20 to 162 (GLFDAPGRSQ…VPQQEQPTAQ (143 aa)) are periplasmic. Cystine bridges form between Cys122–Cys128 and Cys182–Cys304. The helical transmembrane segment at 163–183 (LPFSALWALLIGIGIAFTPCV) threads the bilayer. At 184–207 (LPMYPLISGIVLGGKQRLSTARAL) the chain is on the cytoplasmic side. The chain crosses the membrane as a helical span at residues 208 to 228 (LLTFIYVQGMALTYTALGLVV). Residues 229–242 (AAAGLQFQAALQHP) lie on the Periplasmic side of the membrane. A helical membrane pass occupies residues 243–263 (YVLIGLTIVFTLLAMSMFGLL). The Cytoplasmic portion of the chain corresponds to 264-295 (TLQLPSSLQTRLTLMSNRQQGGSPGGVFIMGT). A helical membrane pass occupies residues 296 to 316 (IAGLICSPCTTAPLSAILLYI). At 317–322 (AQSGNM) the chain is on the periplasmic side. A helical membrane pass occupies residues 323 to 343 (WLGGGTLYLYALGMGLPLMLI). Residues 344-356 (TVFGNRLLPKSGP) are Cytoplasmic-facing. The helical transmembrane segment at 357–377 (WMEQVKTAFGFVILALPVFLL) threads the bilayer. Topologically, residues 378 to 383 (ERVIGD) are periplasmic. A helical membrane pass occupies residues 384–404 (VWGLRLWSALGVAFFGWAFIT). The Cytoplasmic portion of the chain corresponds to 405-417 (SLQAKRGWMRVVQ). Residues 418-438 (IILLAAALVSVRPLQDWAFGA) traverse the membrane as a helical segment. Positions 434–565 (WAFGATHTAQ…FSAHLRDRQP (132 aa)) constitute a Thioredoxin domain. The Periplasmic segment spans residues 439–565 (THTAQTQTHL…FSAHLRDRQP (127 aa)). A disulfide bridge links Cys480 with Cys483.

It belongs to the thioredoxin family. DsbD subfamily.

Its subcellular location is the cell inner membrane. It carries out the reaction [protein]-dithiol + NAD(+) = [protein]-disulfide + NADH + H(+). The enzyme catalyses [protein]-dithiol + NADP(+) = [protein]-disulfide + NADPH + H(+). Required to facilitate the formation of correct disulfide bonds in some periplasmic proteins and for the assembly of the periplasmic c-type cytochromes. Acts by transferring electrons from cytoplasmic thioredoxin to the periplasm. This transfer involves a cascade of disulfide bond formation and reduction steps. This chain is Thiol:disulfide interchange protein DsbD, found in Escherichia coli O157:H7.